The sequence spans 464 residues: Alpha-amylase (464 aa).

A signal peptide spans 1-21; sequence MKNTAGILAIAGMLIAPLAHA. Histidine 107 and arginine 213 together coordinate substrate. Aspartate 215 acts as the Nucleophile in catalysis. Substrate is bound at residue 218–219; the sequence is KH. Glutamate 242 (proton donor) is an active-site residue. Residues glycine 247 and histidine 313 each contribute to the substrate site.

Belongs to the glycosyl hydrolase 13 family.

The protein localises to the secreted. The enzyme catalyses Endohydrolysis of (1-&gt;4)-alpha-D-glucosidic linkages in polysaccharides containing three or more (1-&gt;4)-alpha-linked D-glucose units.. The polypeptide is Alpha-amylase (Aeromonas hydrophila).